Reading from the N-terminus, the 571-residue chain is uncharacterized protein (571 aa).

Residues 1–3 (MNS) are Cytoplasmic-facing. The chain crosses the membrane as a helical span at residues 4–24 (LQILSFVGFTLLVAVITWWKV). Over 25–74 (RKTDTGSQQGYFLAGRSLKAPVIAASLMLTNLSTEQLVGLSGQAYKSGMS) the chain is Periplasmic. The chain crosses the membrane as a helical span at residues 75–95 (VMGWEVTSAVTLIFLALIFLP). Residues 96–118 (RYLKRGIATIPDFLEERYDKTTR) are Cytoplasmic-facing. A helical transmembrane segment spans residues 119-139 (IIIDFCFLIATGVCFLPIVLY). Topologically, residues 140 to 162 (SGALALNSLFHVGESLQISHGAA) are periplasmic. The helical transmembrane segment at 163–183 (IWLLVILLGLAGILYAVIGGL) threads the bilayer. Over 184 to 191 (RAMAVADS) the chain is Cytoplasmic. A helical membrane pass occupies residues 192 to 212 (INGIGLVIGGLMVPVFGLIAM). Topologically, residues 213–240 (GKGSFMQGIEQLTTVHAEKLNSIGGPTD) are periplasmic. Residues 241–261 (PLPIGAAFTGLILVNTFYWCT) traverse the membrane as a helical segment. Residues 262 to 283 (NQGIVQRTLASKSLAEGQKGAL) lie on the Cytoplasmic side of the membrane. Residues 284 to 304 (LTAVLKMLDPLVLVLPGLIAF) traverse the membrane as a helical segment. Topologically, residues 305–324 (HLYQDLPKADMAYPTLVNNV) are periplasmic. A helical transmembrane segment spans residues 325 to 345 (LPVPMVGFFGAVLFGAVISTF). Residues 346-380 (NGFLNSASTLFSMGIYRRIINQNAEPQQLVTVGRK) lie on the Cytoplasmic side of the membrane. A helical transmembrane segment spans residues 381–401 (FGFFIAIVSVLVAPWIANAPQ). The Periplasmic segment spans residues 402 to 415 (GLYSWMKQLNGIYN). Residues 416–436 (VPLVTIIIMGFFFPRIPALAA) traverse the membrane as a helical segment. A topological domain (cytoplasmic) is located at residue Lys437. The helical transmembrane segment at 438-458 (VAMGIGIISYITINYLVKFDF) threads the bilayer. Residues 459–460 (HF) are Periplasmic-facing. Residues 461–481 (LYVLACTFCINVVVMLVIGFI) form a helical membrane-spanning segment. The Cytoplasmic portion of the chain corresponds to 482–505 (KPRATPFTFKDAFAVDMKPWKNVK). A helical membrane pass occupies residues 506–526 (IASIGILFAMIGVYAGLAEFG). Topologically, residues 527–532 (GYGTRW) are periplasmic. A helical membrane pass occupies residues 533–553 (LAMISYFIAAVVIVYLIFDSW). The Cytoplasmic segment spans residues 554-571 (RHRHDPAVTFTPDGKDSL).

This sequence belongs to the sodium:solute symporter (SSF) (TC 2.A.21) family.

The protein resides in the cell inner membrane. This is an uncharacterized protein from Escherichia coli (strain K12).